The primary structure comprises 142 residues: HTH-type transcriptional regulator MntR (142 aa).

In terms of domain architecture, HTH dtxR-type spans 1 to 63 (MPTPSMEDYI…YEKYRGLVLT (63 aa)). Mn(2+)-binding residues include Asp-8, Glu-11, His-77, Glu-99, Glu-102, and His-103.

It belongs to the DtxR/MntR family. As to quaternary structure, homodimer.

It localises to the cytoplasm. With respect to regulation, DNA binding is strongly activated by Mn(2+). Functionally, central regulator of manganese homeostasis. This is HTH-type transcriptional regulator MntR from Bacillus cereus (strain AH820).